A 274-amino-acid chain; its full sequence is uncharacterized protein (274 aa).

Basic and acidic residues predominate over residues 1-20 (MSLEKSLDEIINERTNGFDH). 3 disordered regions span residues 1–63 (MSLE…HDLD), 148–217 (NLKG…EDLD), and 230–274 (ASTV…MEAV). Positions 21-44 (KHSRRRGSQNRISKKSRLTYKFKR) are enriched in basic residues. The span at 45-63 (ASKEHNSSPDDGPWQHDLD) shows a compositional bias: basic and acidic residues. The region spanning 85–161 (FGVRVENLHY…SEIQISKKSP (77 aa)) is the RRM domain. The segment covering 148-160 (NLKGSEIQISKKS) has biased composition (polar residues). Low complexity-rich tracts occupy residues 181–190 (SSRSNRGFNR) and 200–211 (RSSSKKSSNNSI). Positions 230–245 (ASTVSSHSSQDFTPSI) are enriched in polar residues. Over residues 263–274 (LTEEMDLQMEAV) the composition is skewed to acidic residues.

This is an uncharacterized protein from Schizosaccharomyces pombe (strain 972 / ATCC 24843) (Fission yeast).